The following is a 730-amino-acid chain: Catalase-peroxidase (730 aa).

A disordered region spans residues 1 to 21; the sequence is MTENKCPVTGKMSKATAGSGT. Residues 95–218 constitute a cross-link (tryptophyl-tyrosyl-methioninium (Trp-Tyr) (with M-244)); that stretch reads WHSAGTYRVG…LAAVQMGLIY (124 aa). Residue His96 is the Proton acceptor of the active site. The segment at residues 218 to 244 is a cross-link (tryptophyl-tyrosyl-methioninium (Tyr-Met) (with W-95)); that stretch reads YVNPEGPNGNPDPLGSAHDVRETFARM. Residue His259 participates in heme b binding.

It belongs to the peroxidase family. Peroxidase/catalase subfamily. Homodimer or homotetramer. Requires heme b as cofactor. In terms of processing, formation of the three residue Trp-Tyr-Met cross-link is important for the catalase, but not the peroxidase activity of the enzyme.

It catalyses the reaction H2O2 + AH2 = A + 2 H2O. It carries out the reaction 2 H2O2 = O2 + 2 H2O. In terms of biological role, bifunctional enzyme with both catalase and broad-spectrum peroxidase activity. The sequence is that of Catalase-peroxidase from Clostridium botulinum (strain Alaska E43 / Type E3).